Reading from the N-terminus, the 446-residue chain is Thymidine phosphorylase (446 aa).

It belongs to the thymidine/pyrimidine-nucleoside phosphorylase family. As to quaternary structure, homodimer.

The catalysed reaction is thymidine + phosphate = 2-deoxy-alpha-D-ribose 1-phosphate + thymine. The protein operates within pyrimidine metabolism; dTMP biosynthesis via salvage pathway; dTMP from thymine: step 1/2. Its function is as follows. The enzymes which catalyze the reversible phosphorolysis of pyrimidine nucleosides are involved in the degradation of these compounds and in their utilization as carbon and energy sources, or in the rescue of pyrimidine bases for nucleotide synthesis. The sequence is that of Thymidine phosphorylase from Idiomarina loihiensis (strain ATCC BAA-735 / DSM 15497 / L2-TR).